The following is a 350-amino-acid chain: MGVNLKDLIPEEAKMTIEDLRMLRGKIVVIDGYNALYQFLTAIRQPDGTPLMDSQGRITSHLSGLFYRTINILENGIKPAYVFDGKPPEIKAKEIEKRRKIREDASKKYEEALRKGDIEAARRYAMMSAKLTDEMVQDAKKLLDAMGIPWIQAPAEGEAQAAYIVSKGDAWASASQDYDSLLFGSPRLIRNLTISGKRKLPRKNVYIEIKPEIIELKKLLEKLGLTREQLIYVAILIGTDYNPDGVKGIGPKKALQLVKAYKTLDKILKIIPKTEFPIEPEKIVEYFLNPPVSTDYKLEWRAPDESKIREILVEEHDFNPERVKNAVERLVKAYREHIKSKQLGLEAWFS.

The interval 1–102 (MGVNLKDLIP…KEIEKRRKIR (102 aa)) is N-domain. Mg(2+) contacts are provided by Asp-31, Asp-84, Glu-156, Glu-158, Asp-177, Asp-179, and Asp-240. The I-domain stretch occupies residues 120–262 (AARRYAMMSA…KALQLVKAYK (143 aa)). The segment at 341 to 349 (KQLGLEAWF) is interaction with PCNA.

The protein belongs to the XPG/RAD2 endonuclease family. FEN1 subfamily. In terms of assembly, interacts with PCNA. PCNA stimulates the nuclease activity without altering cleavage specificity. It depends on Mg(2+) as a cofactor.

Structure-specific nuclease with 5'-flap endonuclease and 5'-3' exonuclease activities involved in DNA replication and repair. During DNA replication, cleaves the 5'-overhanging flap structure that is generated by displacement synthesis when DNA polymerase encounters the 5'-end of a downstream Okazaki fragment. Binds the unpaired 3'-DNA end and kinks the DNA to facilitate 5' cleavage specificity. Cleaves one nucleotide into the double-stranded DNA from the junction in flap DNA, leaving a nick for ligation. Also involved in the base excision repair (BER) pathway. Acts as a genome stabilization factor that prevents flaps from equilibrating into structures that lead to duplications and deletions. Also possesses 5'-3' exonuclease activity on nicked or gapped double-stranded DNA. The sequence is that of Flap endonuclease 1 from Staphylothermus marinus (strain ATCC 43588 / DSM 3639 / JCM 9404 / F1).